A 707-amino-acid polypeptide reads, in one-letter code: Metal transporter CNNM3 (707 aa).

A helical transmembrane segment spans residues 11–27 (LGWLFAALCLGNAAGEA). A glycan (N-linked (GlcNAc...) asparagine) is linked at Asn-73. In terms of domain architecture, CNNM transmembrane spans 130-308 (EAAPPWALGL…DPYSDLSKGV (179 aa)). 3 consecutive transmembrane segments (helical) span residues 193–213 (CALGALLLLASLAQAALAVLL), 221–241 (AVPAVLGSAGLVFLVGEVVPA), and 261–281 (LAVLLTLPVALPVGQLLELAA). 2 consecutive CBS domains span residues 318–379 (LTPL…CTPL) and 386–452 (YNHP…ILDE). Ser-661 carries the post-translational modification Phosphoserine. Residues 678 to 691 (LGEKTTTAAGSSHS) show a composition bias toward polar residues. The segment at 678–707 (LGEKTTTAAGSSHSRPGVPVEGSPGRNPGV) is disordered. Position 700 is a phosphoserine (Ser-700).

This sequence belongs to the ACDP family. As to expression, widely expressed. Expressed at higher level in heart and spleen.

It is found in the cell membrane. Its function is as follows. Probable metal transporter. The sequence is that of Metal transporter CNNM3 (CNNM3) from Homo sapiens (Human).